Here is a 328-residue protein sequence, read N- to C-terminus: Eukaryotic translation initiation factor 3 subunit I (328 aa).

WD repeat units lie at residues 8 to 49, 50 to 89, 146 to 185, 191 to 230, and 288 to 327; these read GHER…GTYR, GHNG…ELFT, DGKK…LLKQ, GHKK…LLKT, and GHFG…FNIK.

This sequence belongs to the eIF-3 subunit I family. Component of the eukaryotic translation initiation factor 3 (eIF-3) complex.

It localises to the cytoplasm. Functionally, component of the eukaryotic translation initiation factor 3 (eIF-3) complex, which is involved in protein synthesis of a specialized repertoire of mRNAs and, together with other initiation factors, stimulates binding of mRNA and methionyl-tRNAi to the 40S ribosome. The eIF-3 complex specifically targets and initiates translation of a subset of mRNAs involved in cell proliferation. This is Eukaryotic translation initiation factor 3 subunit I (TIF3I1) from Arabidopsis thaliana (Mouse-ear cress).